Consider the following 386-residue polypeptide: NADH-ubiquinone oxidoreductase chain 4 (386 aa).

11 consecutive transmembrane segments (helical) span residues 8–28 (SEFH…YFLF), 37–57 (WPLS…LTFT), 61–81 (FILF…LILG), 91–111 (ASYY…FIII), 133–153 (IFLL…AHIW), 167–187 (MVLA…VQVL), 189–209 (IYSE…SCLI), 219–239 (LIAY…LMSC), 247–267 (ILMM…SYLF), 283–303 (ISLF…NMGL), and 315–335 (FFIG…ILCF).

Belongs to the complex I subunit 4 family.

It is found in the mitochondrion membrane. The catalysed reaction is a ubiquinone + NADH + 5 H(+)(in) = a ubiquinol + NAD(+) + 4 H(+)(out). In terms of biological role, core subunit of the mitochondrial membrane respiratory chain NADH dehydrogenase (Complex I) that is believed to belong to the minimal assembly required for catalysis. Complex I functions in the transfer of electrons from NADH to the respiratory chain. The immediate electron acceptor for the enzyme is believed to be ubiquinone. This is NADH-ubiquinone oxidoreductase chain 4 (ND4) from Artemia franciscana (Brine shrimp).